The primary structure comprises 456 residues: Bifunctional protein GlmU (456 aa).

Positions 1 to 229 (MLNNAMSVVI…LSEVEGVNNR (229 aa)) are pyrophosphorylase. UDP-N-acetyl-alpha-D-glucosamine-binding positions include 11–14 (LAAG), K25, Q76, 81–82 (GT), 103–105 (YGD), G140, E154, N169, and N227. D105 contributes to the Mg(2+) binding site. A Mg(2+)-binding site is contributed by N227. The linker stretch occupies residues 230 to 250 (LQLSRLERVYQSEQAEKLLLA). An N-acetyltransferase region spans residues 251 to 456 (GVMLRDPARF…EGWRRPVKKK (206 aa)). The UDP-N-acetyl-alpha-D-glucosamine site is built by R333 and K351. Catalysis depends on H363, which acts as the Proton acceptor. Y366 and N377 together coordinate UDP-N-acetyl-alpha-D-glucosamine. Residues A380, 386-387 (NY), S405, A423, and R440 each bind acetyl-CoA.

This sequence in the N-terminal section; belongs to the N-acetylglucosamine-1-phosphate uridyltransferase family. It in the C-terminal section; belongs to the transferase hexapeptide repeat family. As to quaternary structure, homotrimer. Requires Mg(2+) as cofactor.

Its subcellular location is the cytoplasm. The enzyme catalyses alpha-D-glucosamine 1-phosphate + acetyl-CoA = N-acetyl-alpha-D-glucosamine 1-phosphate + CoA + H(+). It carries out the reaction N-acetyl-alpha-D-glucosamine 1-phosphate + UTP + H(+) = UDP-N-acetyl-alpha-D-glucosamine + diphosphate. It participates in nucleotide-sugar biosynthesis; UDP-N-acetyl-alpha-D-glucosamine biosynthesis; N-acetyl-alpha-D-glucosamine 1-phosphate from alpha-D-glucosamine 6-phosphate (route II): step 2/2. The protein operates within nucleotide-sugar biosynthesis; UDP-N-acetyl-alpha-D-glucosamine biosynthesis; UDP-N-acetyl-alpha-D-glucosamine from N-acetyl-alpha-D-glucosamine 1-phosphate: step 1/1. It functions in the pathway bacterial outer membrane biogenesis; LPS lipid A biosynthesis. Catalyzes the last two sequential reactions in the de novo biosynthetic pathway for UDP-N-acetylglucosamine (UDP-GlcNAc). The C-terminal domain catalyzes the transfer of acetyl group from acetyl coenzyme A to glucosamine-1-phosphate (GlcN-1-P) to produce N-acetylglucosamine-1-phosphate (GlcNAc-1-P), which is converted into UDP-GlcNAc by the transfer of uridine 5-monophosphate (from uridine 5-triphosphate), a reaction catalyzed by the N-terminal domain. This chain is Bifunctional protein GlmU, found in Escherichia coli (strain 55989 / EAEC).